A 378-amino-acid polypeptide reads, in one-letter code: tRNA-specific 2-thiouridylase MnmA (378 aa).

ATP contacts are provided by residues 9-16 and Met-35; that span reads GVSGGVDS. Positions 94-96 are interaction with target base in tRNA; that stretch reads NPD. The active-site Nucleophile is the Cys-99. Residues Cys-99 and Cys-195 are joined by a disulfide bond. Gly-123 serves as a coordination point for ATP. Residues 145–147 form an interaction with tRNA region; that stretch reads KDQ. The active-site Cysteine persulfide intermediate is Cys-195. Residues 307–308 form an interaction with tRNA region; the sequence is RY.

The protein belongs to the MnmA/TRMU family.

It localises to the cytoplasm. The enzyme catalyses S-sulfanyl-L-cysteinyl-[protein] + uridine(34) in tRNA + AH2 + ATP = 2-thiouridine(34) in tRNA + L-cysteinyl-[protein] + A + AMP + diphosphate + H(+). Catalyzes the 2-thiolation of uridine at the wobble position (U34) of tRNA, leading to the formation of s(2)U34. The polypeptide is tRNA-specific 2-thiouridylase MnmA (Xanthomonas oryzae pv. oryzae (strain MAFF 311018)).